Consider the following 190-residue polypeptide: Glutathione peroxidase 2 (190 aa).

Residue selenocysteine 40 is part of the active site. Position 40 (selenocysteine 40) is a non-standard amino acid, selenocysteine.

It belongs to the glutathione peroxidase family. As to quaternary structure, homotetramer.

It localises to the cytoplasm. Its subcellular location is the cytosol. It catalyses the reaction 2 glutathione + H2O2 = glutathione disulfide + 2 H2O. The enzyme catalyses a hydroperoxy polyunsaturated fatty acid + 2 glutathione = a hydroxy polyunsaturated fatty acid + glutathione disulfide + H2O. The catalysed reaction is tert-butyl hydroperoxide + 2 glutathione = tert-butanol + glutathione disulfide + H2O. It carries out the reaction cumene hydroperoxide + 2 glutathione = 2-phenylpropan-2-ol + glutathione disulfide + H2O. It catalyses the reaction (13S)-hydroperoxy-(9Z,11E)-octadecadienoate + 2 glutathione = (13S)-hydroxy-(9Z,11E)-octadecadienoate + glutathione disulfide + H2O. The enzyme catalyses (5S)-hydroperoxy-(6E,8Z,11Z,14Z)-eicosatetraenoate + 2 glutathione = (5S)-hydroxy-(6E,8Z,11Z,14Z)-eicosatetraenoate + glutathione disulfide + H2O. The catalysed reaction is (12R)-hydroperoxy-(5Z,8Z,10E,14Z)-eicosatetraenoate + 2 glutathione = (12R)-hydroxy-(5Z,8Z,10E,14Z)-eicosatetraenoate + glutathione disulfide + H2O. It carries out the reaction (15S)-hydroperoxy-(5Z,8Z,11Z,13E)-eicosatetraenoate + 2 glutathione = (15S)-hydroxy-(5Z,8Z,11Z,13E)-eicosatetraenoate + glutathione disulfide + H2O. Functionally, catalyzes the reduction of hydroperoxides in a glutathione-dependent manner thus regulating cellular redox homeostasis. Can reduce small soluble hydroperoxides such as H2O2, cumene hydroperoxide and tert-butyl hydroperoxide, as well as several fatty acid-derived hydroperoxides. Cannot reduce phosphatidycholine hydroperoxide. The chain is Glutathione peroxidase 2 (GPX2) from Callithrix jacchus (White-tufted-ear marmoset).